The chain runs to 118 residues: uncharacterized protein (118 aa).

4 helical membrane-spanning segments follow: residues 12 to 32 (IISL…FATF), 39 to 59 (LMPH…SLFI), 63 to 83 (IIGY…CPTI), and 98 to 118 (SAHL…VILF).

The protein localises to the cell membrane. This is an uncharacterized protein from Methanocaldococcus jannaschii (strain ATCC 43067 / DSM 2661 / JAL-1 / JCM 10045 / NBRC 100440) (Methanococcus jannaschii).